We begin with the raw amino-acid sequence, 576 residues long: Eukaryotic translation initiation factor 2A (576 aa).

4 WD repeats span residues 71–119, 266–307, 308–349, and 351–396; these read LPAA…LVFS, DREG…VSII, PPAP…KKIT, and VEAA…MFYE. 2 disordered regions span residues 422-461 and 475-505; these read SASL…QNST and GSAN…NNKK. A compositionally biased stretch (polar residues) spans 475–486; the sequence is GSANKHVNSSRQ.

It belongs to the WD repeat EIF2A family.

The protein resides in the cytoplasm. In terms of biological role, functions in the early steps of protein synthesis of a small number of specific mRNAs. Acts by directing the binding of methionyl-tRNAi to 40S ribosomal subunits. In contrast to the eIF-2 complex, it binds methionyl-tRNAi to 40S subunits in a codon-dependent manner, whereas the eIF-2 complex binds methionyl-tRNAi to 40S subunits in a GTP-dependent manner. The sequence is that of Eukaryotic translation initiation factor 2A from Schizosaccharomyces pombe (strain 972 / ATCC 24843) (Fission yeast).